A 207-amino-acid polypeptide reads, in one-letter code: MTKLSKRQLDILRFIKEEVKRKGYPPSVREIGEAVGLASSSTVHGHLARLETKGLIRRDPTKPRAIEILDTEEEIHIPKNQVVNVPVIGKVTAGTPITAVENIEEYFPLPERLAPPDEHVFMLEIMGESMIDAGILDQDYVIVKQQNTANNGDIVVAMTEDDEATVKRFFKEETHIRLQPENPTMEPIILQNVTILGKVIGVFRTVH.

Residues 28-48 constitute a DNA-binding region (H-T-H motif); that stretch reads VREIGEAVGLASSSTVHGHLA. Residues serine 129 and lysine 167 each act as for autocatalytic cleavage activity in the active site.

This sequence belongs to the peptidase S24 family. In terms of assembly, homodimer.

The enzyme catalyses Hydrolysis of Ala-|-Gly bond in repressor LexA.. In terms of biological role, represses a number of genes involved in the response to DNA damage (SOS response), including recA and lexA. In the presence of single-stranded DNA, RecA interacts with LexA causing an autocatalytic cleavage which disrupts the DNA-binding part of LexA, leading to derepression of the SOS regulon and eventually DNA repair. The sequence is that of LexA repressor from Bacillus licheniformis (strain ATCC 14580 / DSM 13 / JCM 2505 / CCUG 7422 / NBRC 12200 / NCIMB 9375 / NCTC 10341 / NRRL NRS-1264 / Gibson 46).